A 201-amino-acid chain; its full sequence is Pyridoxal 5'-phosphate synthase subunit PdxT (201 aa).

Position 49–51 (49–51) interacts with L-glutamine; that stretch reads GES. C81 functions as the Nucleophile in the catalytic mechanism. L-glutamine contacts are provided by residues R110 and 139–140; that span reads IR. Residues H180 and E182 each act as charge relay system in the active site.

It belongs to the glutaminase PdxT/SNO family. As to quaternary structure, in the presence of PdxS, forms a dodecamer of heterodimers. Only shows activity in the heterodimer.

It carries out the reaction aldehydo-D-ribose 5-phosphate + D-glyceraldehyde 3-phosphate + L-glutamine = pyridoxal 5'-phosphate + L-glutamate + phosphate + 3 H2O + H(+). The catalysed reaction is L-glutamine + H2O = L-glutamate + NH4(+). Its pathway is cofactor biosynthesis; pyridoxal 5'-phosphate biosynthesis. In terms of biological role, catalyzes the hydrolysis of glutamine to glutamate and ammonia as part of the biosynthesis of pyridoxal 5'-phosphate. The resulting ammonia molecule is channeled to the active site of PdxS. The sequence is that of Pyridoxal 5'-phosphate synthase subunit PdxT from Salinispora tropica (strain ATCC BAA-916 / DSM 44818 / JCM 13857 / NBRC 105044 / CNB-440).